A 208-amino-acid chain; its full sequence is Interleukin-6 (208 aa).

The first 29 residues, 1–29, serve as a signal peptide directing secretion; the sequence is MNSLFTSAFSPLAVSLGLLLVMTSAFPTP. Asn-38 carries an N-linked (GlcNAc...) asparagine glycan. Cysteines 72 and 78 form a disulfide. A Phosphoserine modification is found at Ser-81. A disulfide bridge links Cys-101 with Cys-111.

The protein belongs to the IL-6 superfamily. In terms of assembly, component of a hexamer of two molecules each of IL6, IL6R and IL6ST; first binds to IL6R to associate with the signaling subunit IL6ST. Interacts with IL6R (via the N-terminal ectodomain); this interaction may be affected by IL6R-binding with SORL1, hence decreasing IL6 cis signaling. Interacts with SORL1 (via the N-terminal ectodomain); this interaction leads to IL6 internalization and lysosomal degradation. May form a trimeric complex with the soluble SORL1 ectodomain and soluble IL6R receptor; this interaction might stabilize circulating IL6, hence promoting IL6 trans signaling.

It localises to the secreted. Its function is as follows. Cytokine with a wide variety of biological functions in immunity, tissue regeneration, and metabolism. Binds to IL6R, then the complex associates to the signaling subunit IL6ST/gp130 to trigger the intracellular IL6-signaling pathway. The interaction with the membrane-bound IL6R and IL6ST stimulates 'classic signaling', whereas the binding of IL6 and soluble IL6R to IL6ST stimulates 'trans-signaling'. Alternatively, 'cluster signaling' occurs when membrane-bound IL6:IL6R complexes on transmitter cells activate IL6ST receptors on neighboring receiver cells. Functionally, IL6 is a potent inducer of the acute phase response. Rapid production of IL6 contributes to host defense during infection and tissue injury, but excessive IL6 synthesis is involved in disease pathology. In the innate immune response, is synthesized by myeloid cells, such as macrophages and dendritic cells, upon recognition of pathogens through toll-like receptors (TLRs) at the site of infection or tissue injury. In the adaptive immune response, is required for the differentiation of B cells into immunoglobulin-secreting cells. Plays a major role in the differentiation of CD4(+) T cell subsets. Essential factor for the development of T follicular helper (Tfh) cells that are required for the induction of germinal-center formation. Required to drive naive CD4(+) T cells to the Th17 lineage. Also required for proliferation of myeloma cells and the survival of plasmablast cells. In terms of biological role, acts as an essential factor in bone homeostasis and on vessels directly or indirectly by induction of VEGF, resulting in increased angiogenesis activity and vascular permeability. Induces, through 'trans-signaling' and synergistically with IL1B and TNF, the production of VEGF. Involved in metabolic controls, is discharged into the bloodstream after muscle contraction increasing lipolysis and improving insulin resistance. 'Trans-signaling' in central nervous system also regulates energy and glucose homeostasis. Mediates, through GLP-1, crosstalk between insulin-sensitive tissues, intestinal L cells and pancreatic islets to adapt to changes in insulin demand. Also acts as a myokine. Plays a protective role during liver injury, being required for maintenance of tissue regeneration. Also has a pivotal role in iron metabolism by regulating HAMP/hepcidin expression upon inflammation or bacterial infection. Through activation of IL6ST-YAP-NOTCH pathway, induces inflammation-induced epithelial regeneration. The sequence is that of Interleukin-6 (IL6) from Capra hircus (Goat).